Reading from the N-terminus, the 327-residue chain is Cytochrome P450 2C42 (327 aa).

Cys-272 is a heme binding site.

Belongs to the cytochrome P450 family. Heme is required as a cofactor.

It localises to the endoplasmic reticulum membrane. It is found in the microsome membrane. It catalyses the reaction an organic molecule + reduced [NADPH--hemoprotein reductase] + O2 = an alcohol + oxidized [NADPH--hemoprotein reductase] + H2O + H(+). Functionally, cytochromes P450 are a group of heme-thiolate monooxygenases. In liver microsomes, this enzyme is involved in an NADPH-dependent electron transport pathway. It oxidizes a variety of structurally unrelated compounds, including steroids, fatty acids, and xenobiotics. This chain is Cytochrome P450 2C42 (CYP2C42), found in Sus scrofa (Pig).